The primary structure comprises 245 residues: tRNA pseudouridine synthase A 2 (245 aa).

Asp-53 functions as the Nucleophile in the catalytic mechanism. Substrate is bound at residue Tyr-111.

This sequence belongs to the tRNA pseudouridine synthase TruA family. In terms of assembly, homodimer.

It carries out the reaction uridine(38/39/40) in tRNA = pseudouridine(38/39/40) in tRNA. Its function is as follows. Formation of pseudouridine at positions 38, 39 and 40 in the anticodon stem and loop of transfer RNAs. This is tRNA pseudouridine synthase A 2 from Bacillus anthracis.